The chain runs to 167 residues: MAVNDCFSLTYPHNPHPGDLIEVFRPCYQHWALYLGDGYVINIAPIDGIRSSFTSAKSVFSTKALVKMQLLKDVVGNDTYRINNKYDTTYPPLPVEEVIQRSEFPIGQEVAYDLLVNNCEHFVTLLRYGEGVSEQANRAIGTIGLVAAGIDIFTFLGLFPKRQRTKY.

Topologically, residues 1-138 (MAVNDCFSLT…GEGVSEQANR (138 aa)) are cytoplasmic. The LRAT domain maps to 20–135 (LIEVFRPCYQ…LRYGEGVSEQ (116 aa)). Histidine 30 is an active-site residue. Catalysis depends on cysteine 119, which acts as the Acyl-thioester intermediate. A helical membrane pass occupies residues 139-159 (AIGTIGLVAAGIDIFTFLGLF). The Lumenal portion of the chain corresponds to 160 to 167 (PKRQRTKY).

This sequence belongs to the H-rev107 family. As to expression, expressed in skeletal muscle, heart, brain, bone marrow and testis. Abundantly expressed in brain, heart, and skeletal muscle.

Its subcellular location is the membrane. The protein resides in the cytoplasm. It is found in the nucleus. It catalyses the reaction a 1,2-diacyl-sn-glycero-3-phosphocholine + H2O = a 1-acyl-sn-glycero-3-phosphocholine + a fatty acid + H(+). It carries out the reaction a 1,2-diacyl-sn-glycero-3-phosphocholine + H2O = a 2-acyl-sn-glycero-3-phosphocholine + a fatty acid + H(+). The enzyme catalyses 1,2-dihexadecanoyl-sn-glycero-3-phosphocholine + H2O = 2-hexadecanoyl-sn-glycero-3-phosphocholine + hexadecanoate + H(+). The catalysed reaction is 1,2-dihexadecanoyl-sn-glycero-3-phosphocholine + H2O = 1-hexadecanoyl-sn-glycero-3-phosphocholine + hexadecanoate + H(+). It catalyses the reaction 1-hexadecanoyl-2-(5Z,8Z,11Z,14Z-eicosatetraenoyl)-sn-glycero-3-phosphoethanolamine + H2O = 2-(5Z,8Z,11Z,14Z)-eicosatetraenoyl-sn-glycero-3-phosphoethanolamine + hexadecanoate + H(+). It carries out the reaction 1-hexadecanoyl-2-(5Z,8Z,11Z,14Z-eicosatetraenoyl)-sn-glycero-3-phosphoethanolamine + H2O = 1-hexadecanoyl-sn-glycero-3-phosphoethanolamine + (5Z,8Z,11Z,14Z)-eicosatetraenoate + H(+). The enzyme catalyses 1,2-di-(9Z-octadecenoyl)-sn-glycero-3-phosphoethanolamine + 1,2-dihexadecanoyl-sn-glycero-3-phosphocholine = hexadecanoyl-sn-glycero-3-phosphocholine + N-hexadecanoyl-1,2-di-(9Z-octadecenoyl)-sn-glycero-3-phosphoethanolamine + H(+). The catalysed reaction is 1,2-dihexadecanoyl-sn-glycero-3-phosphocholine + a 2-acyl-sn-glycero-3-phosphocholine = a 1-hexadecanoyl-2-acyl-sn-glycero-3-phosphocholine + 2-hexadecanoyl-sn-glycero-3-phosphocholine. Exhibits both phospholipase A1/2 and acyltransferase activities. Shows phospholipase A1 (PLA1) and A2 (PLA2) activity, catalyzing the calcium-independent release of fatty acids from the sn-1 or sn-2 position of glycerophospholipids. Shows O-acyltransferase activity, catalyzing the transfer of a fatty acyl group from glycerophospholipid to the hydroxyl group of lysophospholipid. Shows N-acyltransferase activity, catalyzing the calcium-independent transfer of a fatty acyl group at the sn-1 position of phosphatidylcholine (PC) and other glycerophospholipids to the primary amine of phosphatidylethanolamine (PE), forming N-acylphosphatidylethanolamine (NAPE), which serves as precursor for N-acylethanolamines (NAEs). The polypeptide is Phospholipase A and acyltransferase 1 (Mus musculus (Mouse)).